Reading from the N-terminus, the 328-residue chain is MKAPVRVAVTGAAGQIGYALLFRIASGEMLGKDQPVILQLLELSNEKAQAALKGVMMELEDCAFPLLAGMVGTDDAEVAFKDIDVALLVGARPRGPGMERKDLLLENAKIFTAQGAALNKVAKRDVKVLVVGNPANTNAYIAMESAPDLNPKNFTAMLRLDHNRALSQLSLKLGKPVGGIEKLVVWGNHSPTMYPDYRFATSDGASIGDAINDQEWNAGTFIPTVGKRGAAIIEARGLSSAASAANAAIDHVRDWVLGSNGKWVTMGVPSDGSYGIPEGVIFGFPVTTENGQYTLVKDLPIDDFSQKYIDKTLAELEEERSGVSHLLG.

11–17 (GAAGQIG) is a binding site for NAD(+). The substrate site is built by R94 and R100. Residues N107, Q114, and 131-133 (VGN) each bind NAD(+). Substrate is bound by residues N133 and R164. The Proton acceptor role is filled by H189.

This sequence belongs to the LDH/MDH superfamily. MDH type 2 family.

It carries out the reaction (S)-malate + NAD(+) = oxaloacetate + NADH + H(+). Its function is as follows. Catalyzes the reversible oxidation of malate to oxaloacetate. The sequence is that of Malate dehydrogenase from Xanthomonas campestris pv. campestris (strain B100).